Reading from the N-terminus, the 393-residue chain is ATP phosphoribosyltransferase regulatory subunit (393 aa).

Belongs to the class-II aminoacyl-tRNA synthetase family. HisZ subfamily. Heteromultimer composed of HisG and HisZ subunits.

The protein localises to the cytoplasm. Its pathway is amino-acid biosynthesis; L-histidine biosynthesis; L-histidine from 5-phospho-alpha-D-ribose 1-diphosphate: step 1/9. Its function is as follows. Required for the first step of histidine biosynthesis. May allow the feedback regulation of ATP phosphoribosyltransferase activity by histidine. The protein is ATP phosphoribosyltransferase regulatory subunit of Marinobacter nauticus (strain ATCC 700491 / DSM 11845 / VT8) (Marinobacter aquaeolei).